The following is a 501-amino-acid chain: Betaine aldehyde dehydrogenase, chloroplastic (501 aa).

Residues 1 to 7 (MAIRVPS) constitute a chloroplast transit peptide. Residue 238–243 (GSTATG) coordinates NAD(+). The Proton acceptor role is filled by E260. Residue C294 is the Nucleophile of the active site.

It belongs to the aldehyde dehydrogenase family. As to quaternary structure, homodimer.

It localises to the plastid. It is found in the chloroplast. The catalysed reaction is betaine aldehyde + NAD(+) + H2O = glycine betaine + NADH + 2 H(+). The protein operates within amine and polyamine biosynthesis; betaine biosynthesis via choline pathway; betaine from betaine aldehyde: step 1/1. This chain is Betaine aldehyde dehydrogenase, chloroplastic (BADH4), found in Amaranthus hypochondriacus (Prince-of-Wales feather).